The sequence spans 132 residues: Small ribosomal subunit protein uS8 (132 aa).

Belongs to the universal ribosomal protein uS8 family. As to quaternary structure, part of the 30S ribosomal subunit. Contacts proteins S5 and S12.

One of the primary rRNA binding proteins, it binds directly to 16S rRNA central domain where it helps coordinate assembly of the platform of the 30S subunit. The protein is Small ribosomal subunit protein uS8 of Mycolicibacterium vanbaalenii (strain DSM 7251 / JCM 13017 / BCRC 16820 / KCTC 9966 / NRRL B-24157 / PYR-1) (Mycobacterium vanbaalenii).